Reading from the N-terminus, the 141-residue chain is Nucleoside diphosphate kinase (141 aa).

Lys11, Phe59, Arg87, Thr93, Arg104, and Asn114 together coordinate ATP. The Pros-phosphohistidine intermediate role is filled by His117.

This sequence belongs to the NDK family. In terms of assembly, homotetramer. Mg(2+) serves as cofactor.

Its subcellular location is the cytoplasm. The enzyme catalyses a 2'-deoxyribonucleoside 5'-diphosphate + ATP = a 2'-deoxyribonucleoside 5'-triphosphate + ADP. It catalyses the reaction a ribonucleoside 5'-diphosphate + ATP = a ribonucleoside 5'-triphosphate + ADP. Major role in the synthesis of nucleoside triphosphates other than ATP. The ATP gamma phosphate is transferred to the NDP beta phosphate via a ping-pong mechanism, using a phosphorylated active-site intermediate. The protein is Nucleoside diphosphate kinase of Bordetella petrii (strain ATCC BAA-461 / DSM 12804 / CCUG 43448).